The following is a 572-amino-acid chain: SHUGOSHIN 1 (572 aa).

Residues 59 to 110 are a coiled coil; the sequence is KHQQQAILISSKENAENLQKENTKLMKVVMERDGIKSDLKKLRIEFQKVQEQ. Disordered regions lie at residues 185–221, 244–285, 333–352, and 484–572; these read DADHEHASGSSNANSLQRNEKANSKRRVSGRKNPANS, KLVS…QTET, ARLKSQEPEPSESFHDSIET, and SRRQ…RGGF. The segment covering 192–201 has biased composition (polar residues); the sequence is SGSSNANSLQ. Basic and acidic residues-rich tracts occupy residues 244–257, 336–352, 523–542, and 552–572; these read KLVSDSDNDAENHI, KSQEPEPSESFHDSIET, ELKRESKKKPTGDESEEMRK, and AAEKIKSYKEPSLKEKMRGGF.

Belongs to the shugoshin family.

Protects sister chromatid centromere cohesion in meiosis I but not through the protection of the cohesin SYN1. Required with SGO2 for full protection of centromeric cohesion during anaphase I. Required to prevent precocious release of pericentromeric cohesins during meiosis. Not necessary for the maintenance of the synaptonemal complex (SC). Not required for monopolar spindle orientation in meiosis I. The protein is SHUGOSHIN 1 of Arabidopsis thaliana (Mouse-ear cress).